The chain runs to 260 residues: Arginine esterase (260 aa).

Residues 1–17 form the signal peptide; that stretch reads MWFLALCLAMSLGWTGA. Residues 18 to 24 constitute a propeptide, activation peptide; the sequence is EPHFQPR. In terms of domain architecture, Peptidase S1 spans 25–257; sequence IIGGRECLKN…HLMWIKDTMK (233 aa). Cystine bridges form between cysteine 31-cysteine 172, cysteine 50-cysteine 66, cysteine 151-cysteine 218, cysteine 183-cysteine 197, and cysteine 208-cysteine 233. Histidine 65 functions as the Charge relay system in the catalytic mechanism. Asparagine 79 carries an N-linked (GlcNAc...) asparagine glycan. Residue aspartate 119 is the Charge relay system of the active site. Serine 212 acts as the Charge relay system in catalysis.

It belongs to the peptidase S1 family. Kallikrein subfamily.

It carries out the reaction Preferential cleavage of Arg-|-Xaa bonds in small molecule substrates. Highly selective action to release kallidin (lysyl-bradykinin) from kininogen involves hydrolysis of Met-|-Xaa or Leu-|-Xaa.. This serine protease is found in dog seminal plasma, its exact physiological function is not known. The sequence is that of Arginine esterase from Canis lupus familiaris (Dog).